We begin with the raw amino-acid sequence, 240 residues long: TATA-box-binding protein (240 aa).

The tract at residues 21 to 61 is disordered; it reads NTRQVWENQNRDGTKPATTFQSEEDIKRAAPESEKDTSATS. Residues 44 to 57 show a composition bias toward basic and acidic residues; the sequence is EDIKRAAPESEKDT. 2 repeat units span residues 67–143 and 157–234.

The protein belongs to the TBP family. In terms of assembly, binds DNA as monomer. The 1.2 MDa TFIID complex is composed of TATA binding protein (TBP) and the 14 TBP-associated factors. One copy of each TAF1, TAF2, TAF3, TAF7, TAF8, TAF11, TAF13, two copies of each TAF4, TAF5, TAF6, TAF9, TAF10, TAF12, and three copies of TAF14. Interacts with TFC8.

The protein resides in the nucleus. General transcription factor that functions at the core of the DNA-binding general transcription factor complex TFIID. Binding of TFIID to a promoter (with or without TATA element) is the initial step in preinitiation complex (PIC) formation. TFIID plays a key role in the regulation of gene expression by RNA polymerase II through different activities such as transcription activator interaction, core promoter recognition and selectivity, TFIIA and TFIIB interaction, chromatin modification (histone acetylation by TAF1), facilitation of DNA opening and initiation of transcription. In Saccharomyces cerevisiae (strain ATCC 204508 / S288c) (Baker's yeast), this protein is TATA-box-binding protein (SPT15).